The chain runs to 148 residues: Large ribosomal subunit protein bL9 (148 aa).

The protein belongs to the bacterial ribosomal protein bL9 family.

Functionally, binds to the 23S rRNA. The chain is Large ribosomal subunit protein bL9 from Caldicellulosiruptor bescii (strain ATCC BAA-1888 / DSM 6725 / KCTC 15123 / Z-1320) (Anaerocellum thermophilum).